A 428-amino-acid polypeptide reads, in one-letter code: Protein terminus (428 aa).

The C3H1-type zinc finger occupies 325 to 346 (CRRCRTQFSRRSKLHIHQKLRC).

The sequence is that of Protein terminus (term) from Drosophila melanogaster (Fruit fly).